The chain runs to 535 residues: Thermosome subunit gamma (535 aa).

The protein belongs to the TCP-1 chaperonin family. As to quaternary structure, forms a Heterooligomeric complex of two stacked eight-membered rings.

Molecular chaperone; binds unfolded polypeptides in vitro, and has a weak ATPase activity. The sequence is that of Thermosome subunit gamma (thsC) from Saccharolobus solfataricus (strain ATCC 35092 / DSM 1617 / JCM 11322 / P2) (Sulfolobus solfataricus).